Reading from the N-terminus, the 199-residue chain is dITP/XTP pyrophosphatase (199 aa).

7–12 (SANKGK) serves as a coordination point for substrate. Asp38 and Asp73 together coordinate Mg(2+). Asp73 acts as the Proton acceptor in catalysis. Residues Ser74, 155–158 (FGYD), Lys178, and 183–184 (HR) each bind substrate.

Belongs to the HAM1 NTPase family. Homodimer. Mg(2+) is required as a cofactor.

It carries out the reaction XTP + H2O = XMP + diphosphate + H(+). The enzyme catalyses dITP + H2O = dIMP + diphosphate + H(+). The catalysed reaction is ITP + H2O = IMP + diphosphate + H(+). Functionally, pyrophosphatase that catalyzes the hydrolysis of nucleoside triphosphates to their monophosphate derivatives, with a high preference for the non-canonical purine nucleotides XTP (xanthosine triphosphate), dITP (deoxyinosine triphosphate) and ITP. Seems to function as a house-cleaning enzyme that removes non-canonical purine nucleotides from the nucleotide pool, thus preventing their incorporation into DNA/RNA and avoiding chromosomal lesions. This is dITP/XTP pyrophosphatase from Aliarcobacter butzleri (strain RM4018) (Arcobacter butzleri).